The chain runs to 117 residues: DNA-binding protein VNG_2008H (117 aa).

Residues 1–59 (MSGNPDDDRLEELRQRKKEQLKQQQQGGDAEREAQQQQAQQAEQQKQAMLKQNLTDGAR) form a disordered region. The span at 11–21 (EELRQRKKEQL) shows a compositional bias: basic and acidic residues. The span at 35–48 (QQQQAQQAEQQKQA) shows a compositional bias: low complexity.

This sequence belongs to the PDCD5 family.

This is DNA-binding protein VNG_2008H from Halobacterium salinarum (strain ATCC 700922 / JCM 11081 / NRC-1) (Halobacterium halobium).